Consider the following 239-residue polypeptide: Adenylate kinase 2 (239 aa).

ATP is bound at residue 29-34 (GSGKGT). The segment at 49 to 78 (STGDILRAIIASGSELGQKVQKITESGGLV) is NMP. AMP contacts are provided by residues T50, R55, 76 to 78 (GLV), 104 to 107 (GFPR), and Q111. The interval 145–182 (GRLFHLASGRSYHELFNPPKVPMVDDITGDRLVHRSDD) is LID. ATP contacts are provided by residues R146 and 155 to 156 (SY). Residues R179 and R190 each contribute to the AMP site.

The protein belongs to the adenylate kinase family. AK2 subfamily. As to quaternary structure, monomer. It depends on Mg(2+) as a cofactor.

Its subcellular location is the cytoplasm. The protein localises to the cytosol. The catalysed reaction is AMP + ATP = 2 ADP. Its pathway is purine metabolism; purine nucleotide biosynthesis. Catalyzes the reversible transfer of the terminal phosphate group between ATP and AMP. Plays an important role in cellular energy homeostasis and in adenine nucleotide metabolism. The sequence is that of Adenylate kinase 2 from Schistosoma mansoni (Blood fluke).